Consider the following 143-residue polypeptide: Small ribosomal subunit protein eS12 (143 aa).

Residues Lys-85, Lys-95, and Lys-114 each participate in a glycyl lysine isopeptide (Lys-Gly) (interchain with G-Cter in ubiquitin) cross-link.

It belongs to the eukaryotic ribosomal protein eS12 family. Component of the small ribosomal subunit (SSU). Mature yeast ribosomes consist of a small (40S) and a large (60S) subunit. The 40S small subunit contains 1 molecule of ribosomal RNA (18S rRNA) and 33 different proteins (encoded by 57 genes). The large 60S subunit contains 3 rRNA molecules (25S, 5.8S and 5S rRNA) and 46 different proteins (encoded by 81 genes).

It is found in the cytoplasm. Its function is as follows. Component of the ribosome, a large ribonucleoprotein complex responsible for the synthesis of proteins in the cell. The small ribosomal subunit (SSU) binds messenger RNAs (mRNAs) and translates the encoded message by selecting cognate aminoacyl-transfer RNA (tRNA) molecules. The large subunit (LSU) contains the ribosomal catalytic site termed the peptidyl transferase center (PTC), which catalyzes the formation of peptide bonds, thereby polymerizing the amino acids delivered by tRNAs into a polypeptide chain. The nascent polypeptides leave the ribosome through a tunnel in the LSU and interact with protein factors that function in enzymatic processing, targeting, and the membrane insertion of nascent chains at the exit of the ribosomal tunnel. The chain is Small ribosomal subunit protein eS12 from Saccharomyces cerevisiae (strain ATCC 204508 / S288c) (Baker's yeast).